We begin with the raw amino-acid sequence, 144 residues long: MRLMGLDVGSRTVGVAVSDPLGWTAQGLEIIRINEDKEQFGIARLKELVKQYEVTAFVLGLPKNMNNSIGPRAEKSQAYGELLKTTFGLPVDFIDERLTTVEASRMLIEEADASRKRQKQVIDKLAAQMILQNYLDAKGPLTKQ.

Belongs to the YqgF nuclease family.

It is found in the cytoplasm. Could be a nuclease involved in processing of the 5'-end of pre-16S rRNA. This is Putative pre-16S rRNA nuclease from Lacticaseibacillus casei (strain BL23) (Lactobacillus casei).